A 599-amino-acid chain; its full sequence is Prostaglandin G/H synthase 1 (599 aa).

Positions 1-23 (MSRSLLLWFLLFLLLLPPLPVLL) are cleaved as a signal peptide. Residues 31-69 (PVNPCCYYPCQHQGICVRFGLDRYQCDCTRTGYSGPNCT) form the EGF-like domain. Intrachain disulfides connect cysteine 35–cysteine 46, cysteine 36–cysteine 158, cysteine 40–cysteine 56, and cysteine 58–cysteine 68. 3 N-linked (GlcNAc...) asparagine glycosylation sites follow: asparagine 67, asparagine 103, and asparagine 143. Catalysis depends on histidine 206, which acts as the Proton acceptor. Tyrosine 384 serves as the catalytic For cyclooxygenase activity. Heme b is bound at residue histidine 387. Cysteine 568 and cysteine 574 are oxidised to a cystine.

The protein belongs to the prostaglandin G/H synthase family. As to quaternary structure, homodimer. Heme b is required as a cofactor.

It localises to the microsome membrane. The protein resides in the endoplasmic reticulum membrane. It carries out the reaction (5Z,8Z,11Z,14Z)-eicosatetraenoate + AH2 + 2 O2 = prostaglandin H2 + A + H2O. It catalyses the reaction (5Z,8Z,11Z,14Z)-eicosatetraenoate + 2 O2 = prostaglandin G2. The catalysed reaction is prostaglandin G2 + AH2 = prostaglandin H2 + A + H2O. The enzyme catalyses (9Z,12Z)-octadecadienoate + AH2 + O2 = (9R)-hydroxy-(10E,12Z)-octadecadienoate + A + H2O. It carries out the reaction (9Z,12Z)-octadecadienoate + AH2 + O2 = (9S)-hydroxy-(10E,12Z)-octadecadienoate + A + H2O. It catalyses the reaction (9Z,12Z)-octadecadienoate + AH2 + O2 = (13S)-hydroxy-(9Z,11E)-octadecadienoate + A + H2O. The catalysed reaction is (9Z,12Z)-octadecadienoate + AH2 + O2 = (13R)-hydroxy-(9Z,11E)-octadecadienoate + A + H2O. Its pathway is lipid metabolism; prostaglandin biosynthesis. Its activity is regulated as follows. The cyclooxygenase activity is inhibited by nonsteroidal anti-inflammatory drugs (NSAIDs) including ibuprofen, flurbiprofen, ketoprofen, naproxen, flurbiprofen, anirolac, fenclofenac and diclofenac. In terms of biological role, dual cyclooxygenase and peroxidase that plays an important role in the biosynthesis pathway of prostanoids, a class of C20 oxylipins mainly derived from arachidonate ((5Z,8Z,11Z,14Z)-eicosatetraenoate, AA, C20:4(n-6)), with a particular role in the inflammatory response. The cyclooxygenase activity oxygenates AA to the hydroperoxy endoperoxide prostaglandin G2 (PGG2), and the peroxidase activity reduces PGG2 to the hydroxy endoperoxide prostaglandin H2 (PGH2), the precursor of all 2-series prostaglandins and thromboxanes. This complex transformation is initiated by abstraction of hydrogen at carbon 13 (with S-stereochemistry), followed by insertion of molecular O2 to form the endoperoxide bridge between carbon 9 and 11 that defines prostaglandins. The insertion of a second molecule of O2 (bis-oxygenase activity) yields a hydroperoxy group in PGG2 that is then reduced to PGH2 by two electrons. Involved in the constitutive production of prostanoids in particular in the stomach and platelets. In gastric epithelial cells, it is a key step in the generation of prostaglandins, such as prostaglandin E2 (PGE2), which plays an important role in cytoprotection. In platelets, it is involved in the generation of thromboxane A2 (TXA2), which promotes platelet activation and aggregation, vasoconstriction and proliferation of vascular smooth muscle cells. Can also use linoleate (LA, (9Z,12Z)-octadecadienoate, C18:2(n-6)) as substrate and produce hydroxyoctadecadienoates (HODEs) in a regio- and stereospecific manner, being (9R)-HODE ((9R)-hydroxy-(10E,12Z)-octadecadienoate) and (13S)-HODE ((13S)-hydroxy-(9Z,11E)-octadecadienoate) its major products. This is Prostaglandin G/H synthase 1 from Homo sapiens (Human).